Here is a 461-residue protein sequence, read N- to C-terminus: Juvenile hormone epoxide hydrolase (461 aa).

The helical transmembrane segment at 4–24 threads the bilayer; the sequence is LLFIALPLLVLASIPLYLLVL. D227 acts as the Nucleophile in catalysis. Y373 serves as the catalytic Proton donor. H430 functions as the Proton acceptor in the catalytic mechanism.

This sequence belongs to the peptidase S33 family. Homodimer. In terms of tissue distribution, expressed in fat body, foregut and midgut but not in brain, subesophageal ganglia or silk gland of larvae on day 1 of fifth instar.

Its subcellular location is the microsome membrane. The protein resides in the endoplasmic reticulum membrane. The catalysed reaction is cis-stilbene oxide + H2O = (1R,2R)-hydrobenzoin. It catalyses the reaction 1-(4-methoxyphenyl)-N-methyl-N-[(3-methyloxetan-3-yl)methyl]methanamine + H2O = 2-{[(4-methoxybenzyl)(methyl)amino]methyl}-2-methylpropane-1,3-diol. Functionally, catalyzes juvenile hormone hydrolysis. Degrades juvenile hormone III (JH III) about 3 times and 5 times slower than juvenile hormone I (JH I) and II (JH II), respectively. Degrades cis-stilbene oxide and trans-stilbene oxide about 18 and 43 times slower than JH III, respectively. The sequence is that of Juvenile hormone epoxide hydrolase from Bombyx mori (Silk moth).